Here is a 151-residue protein sequence, read N- to C-terminus: Cytochrome c-type biogenesis protein CcmE 1 (151 aa).

Over 1–8 (MNPLRKKR) the chain is Cytoplasmic. Residues 9-29 (LIIILAILVGVGAAVGLALSA) traverse the membrane as a helical; Signal-anchor for type II membrane protein segment. Topologically, residues 30 to 151 (LQQNINLFYT…QSAPTPAKEG (122 aa)) are periplasmic. Heme contacts are provided by His-124 and Tyr-128. A disordered region spans residues 131-151 (PEVTKALKDSGQSAPTPAKEG).

The protein belongs to the CcmE/CycJ family.

The protein resides in the cell inner membrane. In terms of biological role, heme chaperone required for the biogenesis of c-type cytochromes. Transiently binds heme delivered by CcmC and transfers the heme to apo-cytochromes in a process facilitated by CcmF and CcmH. In Pseudomonas fluorescens (strain Pf0-1), this protein is Cytochrome c-type biogenesis protein CcmE 1.